The chain runs to 208 residues: Golgi apparatus membrane protein TVP23 homolog B (208 aa).

N-acetylmethionine is present on Met1. Residues 1 to 21 (MLQQDSNDDTEDVSLFDAEEE) show a composition bias toward acidic residues. A disordered region spans residues 1–27 (MLQQDSNDDTEDVSLFDAEEETTNRPK). 4 helical membrane-spanning segments follow: residues 34–53 (PVAS…VYLL), 54–72 (CELF…ILLL), 126–146 (IFWL…FSAL), and 152–172 (KWLA…YGYI).

This sequence belongs to the TVP23 family.

The protein localises to the membrane. The chain is Golgi apparatus membrane protein TVP23 homolog B (TVP23B) from Bos taurus (Bovine).